Consider the following 96-residue polypeptide: Citrate lyase acyl carrier protein (96 aa).

S14 carries the O-(phosphoribosyl dephospho-coenzyme A)serine modification.

Belongs to the CitD family. As to quaternary structure, oligomer with a subunit composition of (alpha,beta,gamma)6.

The protein resides in the cytoplasm. In terms of biological role, covalent carrier of the coenzyme of citrate lyase. The sequence is that of Citrate lyase acyl carrier protein from Lactococcus lactis subsp. lactis (strain IL1403) (Streptococcus lactis).